Here is a 426-residue protein sequence, read N- to C-terminus: UPF0229 protein Csal_0882 (426 aa).

A compositionally biased stretch (basic and acidic residues) spans 82–93 (FVEGDRLRRPGG). A disordered region spans residues 82–109 (FVEGDRLRRPGGEGRGGSGEGSASNQGE).

This sequence belongs to the UPF0229 family.

The protein is UPF0229 protein Csal_0882 of Chromohalobacter salexigens (strain ATCC BAA-138 / DSM 3043 / CIP 106854 / NCIMB 13768 / 1H11).